Reading from the N-terminus, the 286-residue chain is Bifunctional protein FolD (286 aa).

Residues 166 to 168 and Ile-232 each bind NADP(+); that span reads GAS.

It belongs to the tetrahydrofolate dehydrogenase/cyclohydrolase family. Homodimer.

The enzyme catalyses (6R)-5,10-methylene-5,6,7,8-tetrahydrofolate + NADP(+) = (6R)-5,10-methenyltetrahydrofolate + NADPH. The catalysed reaction is (6R)-5,10-methenyltetrahydrofolate + H2O = (6R)-10-formyltetrahydrofolate + H(+). It participates in one-carbon metabolism; tetrahydrofolate interconversion. Catalyzes the oxidation of 5,10-methylenetetrahydrofolate to 5,10-methenyltetrahydrofolate and then the hydrolysis of 5,10-methenyltetrahydrofolate to 10-formyltetrahydrofolate. This Marinobacter nauticus (strain ATCC 700491 / DSM 11845 / VT8) (Marinobacter aquaeolei) protein is Bifunctional protein FolD.